The following is a 311-amino-acid chain: Malate dehydrogenase (311 aa).

Residues 7–13 (GAAGGIG) and Asp34 each bind NAD(+). 2 residues coordinate substrate: Arg81 and Arg87. Residues Asn94 and 117-119 (ITN) each bind NAD(+). Substrate is bound by residues Asn119 and Arg153. The active-site Proton acceptor is His177. NAD(+) is bound at residue Met227.

It belongs to the LDH/MDH superfamily. MDH type 1 family. In terms of assembly, homodimer.

The enzyme catalyses (S)-malate + NAD(+) = oxaloacetate + NADH + H(+). Catalyzes the reversible oxidation of malate to oxaloacetate. The sequence is that of Malate dehydrogenase from Haemophilus influenzae (strain PittGG).